Here is a 363-residue protein sequence, read N- to C-terminus: Alanine racemase (363 aa).

Lys39 acts as the Proton acceptor; specific for D-alanine in catalysis. At Lys39 the chain carries N6-(pyridoxal phosphate)lysine. Arg134 lines the substrate pocket. Tyr251 serves as the catalytic Proton acceptor; specific for L-alanine. Residue Met299 coordinates substrate.

The protein belongs to the alanine racemase family. Requires pyridoxal 5'-phosphate as cofactor.

It catalyses the reaction L-alanine = D-alanine. It functions in the pathway amino-acid biosynthesis; D-alanine biosynthesis; D-alanine from L-alanine: step 1/1. In terms of biological role, catalyzes the interconversion of L-alanine and D-alanine. May also act on other amino acids. The polypeptide is Alanine racemase (alr) (Thermodesulfovibrio yellowstonii (strain ATCC 51303 / DSM 11347 / YP87)).